Here is a 230-residue protein sequence, read N- to C-terminus: Large ribosomal subunit protein uL1c (230 aa).

It belongs to the universal ribosomal protein uL1 family. Part of the 50S ribosomal subunit.

Its subcellular location is the plastid. It localises to the chloroplast. Functionally, binds directly to 23S rRNA. Might be involved in E site tRNA release (Potential). This Phaeodactylum tricornutum (strain CCAP 1055/1) protein is Large ribosomal subunit protein uL1c (rpl1).